A 210-amino-acid chain; its full sequence is Somatotropin (210 aa).

The N-terminal stretch at methionine 1–alanine 22 is a signal peptide. Histidine 38 is a Zn(2+) binding site. Cysteine 71 and cysteine 183 form a disulfide bridge. Glutamate 192 provides a ligand contact to Zn(2+). The cysteines at positions 200 and 208 are disulfide-linked.

This sequence belongs to the somatotropin/prolactin family.

Its subcellular location is the secreted. Functionally, growth hormone plays an important role in growth control and is involved in the regulation of several anabolic processes. Implicated as an osmoregulatory substance important for seawater adaptation. The polypeptide is Somatotropin (gh) (Misgurnus mizolepis (Chinese weatherloach)).